A 62-amino-acid chain; its full sequence is Large ribosomal subunit protein uL29 (62 aa).

This sequence belongs to the universal ribosomal protein uL29 family.

In Geotalea daltonii (strain DSM 22248 / JCM 15807 / FRC-32) (Geobacter daltonii), this protein is Large ribosomal subunit protein uL29.